The chain runs to 715 residues: Polyribonucleotide nucleotidyltransferase (715 aa).

The Mg(2+) site is built by Asp-497 and Asp-503. A KH domain is found at 564–623 (PRLLTMKIDPEQIGLVIGPGGKTIKSITEQTGSKIDIADDGTVTIAAIQAKKAERARDLI). An S1 motif domain is found at 633 to 701 (GEVYLGRVTR…NKGRLNLTRL (69 aa)).

This sequence belongs to the polyribonucleotide nucleotidyltransferase family. Requires Mg(2+) as cofactor.

The protein localises to the cytoplasm. The catalysed reaction is RNA(n+1) + phosphate = RNA(n) + a ribonucleoside 5'-diphosphate. Its function is as follows. Involved in mRNA degradation. Catalyzes the phosphorolysis of single-stranded polyribonucleotides processively in the 3'- to 5'-direction. The sequence is that of Polyribonucleotide nucleotidyltransferase from Crocosphaera subtropica (strain ATCC 51142 / BH68) (Cyanothece sp. (strain ATCC 51142)).